The sequence spans 30 residues: Putative UPF0377 protein YNR075C-A (30 aa).

The protein belongs to the UPF0377 family.

The polypeptide is Putative UPF0377 protein YNR075C-A (Saccharomyces cerevisiae (strain ATCC 204508 / S288c) (Baker's yeast)).